A 461-amino-acid chain; its full sequence is Ribonuclease inhibitor (461 aa).

Serine 2 is modified (N-acetylserine). Residues 2–11 (SLDIQSLDIQ) are 2 X 5 AA tandem repeats of S-L-D-I-Q. LRR repeat units lie at residues 20–48 (WAEL…CKDI), 49–76 (SSAL…VHCV), 77–105 (LQGL…CGVL), 106–133 (SSTL…LQLL), 134–162 (CEGL…CKPL), 163–190 (ASVL…VRVL), 191–219 (CQGL…CRDL), 220–247 (CGIV…MAEL), 248–276 (CPGL…CGDL), 277–304 (CRVL…ARLL), 305–333 (CETL…CSHF), 334–361 (SSVL…VQEL), 362–390 (CQGL…CSSL), 391–418 (AATL…ILQL), and 419–447 (VESV…EDRL). Serine 91 carries the phosphoserine modification.

As to quaternary structure, forms high-affinity heterodimers with RNASE1, ANG and RNASE2.

Its subcellular location is the cytoplasm. The protein resides in the nucleus. Ribonuclease inhibitor which inhibits RNASE1, RNASE2 and angiogenin (ANG). May play a role in redox homeostasis. Required to inhibit the cytotoxic tRNA ribonuclease activity of ANG in the cytoplasm in absence of stress. Relocates to the nucleus in response to stress, relieving inhibition of ANG in the cytoplasm, and inhibiting the angiogenic activity of ANG in the nucleus. In Pan troglodytes (Chimpanzee), this protein is Ribonuclease inhibitor (RNH1).